The sequence spans 297 residues: GTP cyclohydrolase FolE2 (297 aa).

This sequence belongs to the GTP cyclohydrolase IV family.

It carries out the reaction GTP + H2O = 7,8-dihydroneopterin 3'-triphosphate + formate + H(+). Its pathway is cofactor biosynthesis; 7,8-dihydroneopterin triphosphate biosynthesis; 7,8-dihydroneopterin triphosphate from GTP: step 1/1. Functionally, converts GTP to 7,8-dihydroneopterin triphosphate. This is GTP cyclohydrolase FolE2 from Pseudomonas fluorescens (strain ATCC BAA-477 / NRRL B-23932 / Pf-5).